We begin with the raw amino-acid sequence, 194 residues long: Large ribosomal subunit protein eL15 (194 aa).

Over residues 162–173 (KTSAGRRARGLH) the composition is skewed to basic residues. Positions 162–194 (KTSAGRRARGLHNRGTGTEKCRPSLTSHKNQGK) are disordered. Polar residues predominate over residues 185–194 (SLTSHKNQGK).

This sequence belongs to the eukaryotic ribosomal protein eL15 family.

This chain is Large ribosomal subunit protein eL15, found in Methanocorpusculum labreanum (strain ATCC 43576 / DSM 4855 / Z).